The primary structure comprises 535 residues: Triacylglyceride transporter MHAS_02168/C731_2106 (535 aa).

Over 1–18 (MAFPQTPNRLIRPRRTSR) the chain is Cytoplasmic. A helical transmembrane segment spans residues 19-39 (GIAISAGGLAVLLGALDTYVV). Residues 40-60 (VSIVTDIMRDVGIAVNQIQRV) lie on the Periplasmic side of the membrane. The chain crosses the membrane as a helical span at residues 61–82 (TPIITGYLLGYIAAMPLLGRAS). Residues 83–86 (DRFG) are Cytoplasmic-facing. A helical membrane pass occupies residues 87–107 (RKLLIQISLAGFALGSVITAL). At 108-111 (ATNL) the chain is on the periplasmic side. A helical membrane pass occupies residues 112 to 136 (DVLVAGRVIQGAASGALLPVTLALA). Topologically, residues 137 to 145 (ADLWATHKR) are cytoplasmic. Residues 146 to 167 (AAVLGGVGAAQELGAVLGPIYG) traverse the membrane as a helical segment. Residues 168-177 (IFVVWLFHHW) lie on the Periplasmic side of the membrane. Residues 178–198 (QAVFWVNVPLALIAMVLIHIS) form a helical membrane-spanning segment. Over 199-212 (LPPRVRTEEPQRVD) the chain is Cytoplasmic. Residues 213-230 (VTGGLLLALALGLATIGL) traverse the membrane as a helical segment. Residues 231 to 243 (YNAEPDGKQVLPE) are Periplasmic-facing. A helical membrane pass occupies residues 244–263 (YGPPLIIGAVIAAVAFLVWE). Topologically, residues 264-278 (RFARTRLLDPAGVRF) are cytoplasmic. Residues 279–300 (RPFLIALLVSLVTGGALMVTLV) form a helical membrane-spanning segment. Residues 301-320 (NVELFGQGVLGLDQDEAVFL) lie on the Periplasmic side of the membrane. 2 helical membrane-spanning segments follow: residues 321–343 (LARF…TRVG) and 344–364 (DRAV…LIAQ). The Periplasmic segment spans residues 365-384 (WPADVLESRHDLGFVSLPTL). Residues 373-382 (RHDLGFVSLP) form a beta-hairpin region. The chain crosses the membrane as a helical span at residues 385-407 (DTDLAIAGFGLGLVIAPLTSAAL). The Cytoplasmic portion of the chain corresponds to 408 to 415 (RVVPAAQH). Residues 416-440 (GIASAAVVVARMIGMLIGIAALSAW) form a helical membrane-spanning segment. Topologically, residues 441–487 (GLYRFNQYLKEQLAALPPAPADFPGGQMAGQMMRLRTATVQAYVLQY) are periplasmic. Residues 488–507 (GEIFAITAGLCVFGAVLGLF) form a helical membrane-spanning segment. Residues 508–535 (IAGRREHAEESADAVDGVSNARDRAPSA) are Cytoplasmic-facing.

It belongs to the major facilitator superfamily. P55 (TC 2.A.1.3.34) family.

It localises to the cell inner membrane. In terms of biological role, in association with lipoprotein LprG transports triacylglycerides (TAG) across the inner cell membrane, probably transfering them to lipoprotein LprG in the periplasm. TAG probably regulates lipid metabolism and growth regulation and plays a structural role in the outer membrane. Mutagenesis and molecular modeling suggests TAG (and maybe other lipids) enters the central cavity of the P55 transporter from within the cell inner membrane via clefts on the cytoplasmic face of P55 between TM5-TM8 and TM2-TM11. From there the lipid is probably transferred to the hydrophobic cavity of LprG. The lprG-MHAS_02167/C731_2107 operon complements the vancomycin sensitivity of an M.smegmatis knockout of the same operon. Probably required with LprG for normal surface localization of lipoarabinomannan (LAM). The sequence is that of Triacylglyceride transporter MHAS_02168/C731_2106 from Mycolicibacterium hassiacum (strain DSM 44199 / CIP 105218 / JCM 12690 / 3849) (Mycobacterium hassiacum).